The sequence spans 349 residues: Diacylglycerol O-acyltransferase 2B (349 aa).

A run of 2 helical transmembrane segments spans residues 44 to 64 (ICLIIYLYLFTIPLLWPILIM) and 114 to 134 (YIMSYHPHGIISMAAFANFAT).

The protein belongs to the diacylglycerol acyltransferase family.

The protein localises to the endoplasmic reticulum membrane. The enzyme catalyses an acyl-CoA + a 1,2-diacyl-sn-glycerol = a triacyl-sn-glycerol + CoA. It functions in the pathway glycerolipid metabolism; triacylglycerol biosynthesis. Catalyzes the terminal and only committed step in triacylglycerol synthesis by using diacylglycerol and fatty acyl CoA as substrates. Required for storage lipid synthesis. This chain is Diacylglycerol O-acyltransferase 2B (DGAT2B), found in Umbelopsis ramanniana (Oleaginous fungus).